The primary structure comprises 515 residues: Adenine DNA glycosylase (515 aa).

The segment covering 1-24 (MKKLQASVRSHKKQPANHKRRRTR) has biased composition (basic residues). The segment at 1–38 (MKKLQASVRSHKKQPANHKRRRTRALSSSQAKPSSLDG) is disordered. Residue Glu-105 is the Proton donor/acceptor of the active site. [4Fe-4S] cluster is bound by residues Cys-261, Cys-268, Cys-271, and Cys-277. The region spanning 335-466 (PREEYSATCV…AMKKVFRMYE (132 aa)) is the Nudix hydrolase domain. A Nudix box motif is present at residues 376-398 (VTLEPSEQHQHKALLQELQRWCG). The disordered stretch occupies residues 468–494 (HRQGTRKGSKRSQVCPPSSRKKPSLGQ).

This sequence belongs to the Nth/MutY family. [4Fe-4S] cluster is required as a cofactor. As to expression, expressed in heart, lung, liver, intestine, brain and thymus.

The protein resides in the nucleus. The protein localises to the mitochondrion. It carries out the reaction Hydrolyzes free adenine bases from 7,8-dihydro-8-oxoguanine:adenine mismatched double-stranded DNA, leaving an apurinic site.. Functionally, involved in oxidative DNA damage repair. Initiates repair of A*oxoG to C*G by removing the inappropriately paired adenine base from the DNA backbone. Possesses both adenine and 2-OH-A DNA glycosylase activities. This Mus musculus (Mouse) protein is Adenine DNA glycosylase (Mutyh).